Here is a 419-residue protein sequence, read N- to C-terminus: LWamide neuropeptides (419 aa).

Residues 1–27 form the signal peptide; the sequence is MEKEMRNLMLLVLLTVILDNGIGKCNA. Residues 27–48 form a disordered region; that stretch reads AKSEEDQDGNARNNRIDKNDDN. Positions 28–104 are excised as a propeptide; the sequence is KSEEDQDGNA…ENLDIDSTVQ (77 aa). Trp-110 carries the post-translational modification Tryptophan amide. Positions 113-140 are excised as a propeptide; that stretch reads EADFDNTRAHDSAQISDEKQSGLWVGDA. Positions 120–132 are enriched in basic and acidic residues; that stretch reads RAHDSAQISDEKQ. Residues 120–332 are disordered; the sequence is RAHDSAQISD…PGLWGRQVED (213 aa). Residue Trp-146 is modified to Tryptophan amide. The propeptide occupies 149–150; that stretch reads DA. The residue at position 156 (Trp-156) is a Tryptophan amide. Residues 159–160 constitute a propeptide that is removed on maturation; that stretch reads DA. Residue Trp-166 is modified to Tryptophan amide. Positions 169-170 are excised as a propeptide; the sequence is DA. Trp-176 carries the post-translational modification Tryptophan amide. A propeptide spanning residues 179-180 is cleaved from the precursor; the sequence is DA. Trp-186 carries the tryptophan amide modification. A propeptide spanning residues 189 to 190 is cleaved from the precursor; it reads DA. Trp-196 bears the Tryptophan amide mark. Positions 199–200 are excised as a propeptide; sequence DA. Trp-206 carries the tryptophan amide modification. The propeptide occupies 209–210; sequence DA. A Tryptophan amide modification is found at Trp-216. Positions 218-220 are cleaved as a propeptide — seems to have a sequencing error or a mutation in position 218; Gly instead of Arg; it reads GDA. The residue at position 226 (Trp-226) is a Tryptophan amide. A propeptide spanning residues 229 to 230 is cleaved from the precursor; it reads DA. At Trp-236 the chain carries Tryptophan amide. A propeptide spanning residues 239–240 is cleaved from the precursor; it reads DA. Tryptophan amide is present on Trp-246. A propeptide spanning residues 249–250 is cleaved from the precursor; it reads DA. Trp-256 is subject to Tryptophan amide. Positions 259–260 are excised as a propeptide; the sequence is DA. Trp-266 is modified (tryptophan amide). The propeptide occupies 269 to 270; that stretch reads DA. The residue at position 276 (Trp-276) is a Tryptophan amide. Residues 279 to 280 constitute a propeptide that is removed on maturation; the sequence is DT. Trp-286 carries the post-translational modification Tryptophan amide. A propeptide spanning residues 289–290 is cleaved from the precursor; that stretch reads DA. At Trp-296 the chain carries Tryptophan amide. 2 consecutive propeptides follow at residues 299–300 and 309–320; these read DA and DNNVIKSRSDDA. Trp-326 carries the post-translational modification Tryptophan amide. A propeptide spanning residues 329–419 is cleaved from the precursor; the sequence is QVEDGPTKIW…RRNNKKNNKF (91 aa).

The protein belongs to the LWamide neuropeptide family. In terms of tissue distribution, in planula larvae, expressed in a narrow ring of ectodermal neurosensory cells around the widest circumference at the anterior of the larvae. In primary polyps, expression is confined to endodermal cells of the hypostome. In mature polyps, expression is strong in the epidermis from the tentacle level to the base of the polyp and weak in the gastrodermal cells in the apical hypostome.

It is found in the secreted. In terms of biological role, LWamide peptides may be involved in induction of metamorphosis. In Hydractinia echinata (Snail fur), this protein is LWamide neuropeptides.